Reading from the N-terminus, the 901-residue chain is HTH-type transcriptional regulator MalT (901 aa).

An ATP-binding site is contributed by 39-46 (SPAGYGKT). The HTH luxR-type domain occupies 829 to 894 (ELIRTSPLTQ…AAVQHAQKLL (66 aa)). The segment at residues 853–872 (NEQIAGELEVAATTIKTHIR) is a DNA-binding region (H-T-H motif).

It belongs to the MalT family. In terms of assembly, monomer in solution. Oligomerizes to an active state in the presence of the positive effectors ATP and maltotriose.

Its activity is regulated as follows. Activated by ATP and maltotriose, which are both required for DNA binding. In terms of biological role, positively regulates the transcription of the maltose regulon whose gene products are responsible for uptake and catabolism of malto-oligosaccharides. Specifically binds to the promoter region of its target genes, recognizing a short DNA motif called the MalT box. The protein is HTH-type transcriptional regulator MalT of Escherichia coli O45:K1 (strain S88 / ExPEC).